Here is a 345-residue protein sequence, read N- to C-terminus: Beta-2-glycoprotein 1 (345 aa).

An N-terminal signal peptide occupies residues 1–19; sequence MISPVLILFSSFLCHVAIA. Sushi domains are found at residues 21–81, 82–139, 140–202, and 203–262; these read RTCP…KCTP, RVCP…VCAP, IICP…ECRE, and VKCP…SCKA. Cystine bridges form between cysteine 23–cysteine 66, cysteine 51–cysteine 79, cysteine 84–cysteine 124, cysteine 110–cysteine 137, cysteine 142–cysteine 188, cysteine 174–cysteine 200, cysteine 205–cysteine 248, cysteine 234–cysteine 260, cysteine 264–cysteine 315, cysteine 300–cysteine 325, and cysteine 307–cysteine 345. An O-linked (GalNAc...) threonine glycan is attached at threonine 33. The O-linked (GalNAc...) threonine glycan is linked to threonine 149. The N-linked (GlcNAc...) (complex) asparagine glycan is linked to asparagine 162. N-linked (GlcNAc...) asparagine glycans are attached at residues asparagine 183 and asparagine 193. Residue asparagine 253 is glycosylated (N-linked (GlcNAc...) asparagine). The segment at 263 to 345 is sushi-like; the sequence is SCKVPVKKAT…KTDASDVKPC (83 aa).

In terms of processing, N- and O-glycosylated. PubMed:6587378 also reports glycosylation on 'Asn-188' for their allele. As to expression, expressed by the liver and secreted in plasma.

It is found in the secreted. Functionally, binds to various kinds of negatively charged substances such as heparin, phospholipids, and dextran sulfate. May prevent activation of the intrinsic blood coagulation cascade by binding to phospholipids on the surface of damaged cells. This Homo sapiens (Human) protein is Beta-2-glycoprotein 1 (APOH).